A 318-amino-acid polypeptide reads, in one-letter code: Aspartate carbamoyltransferase catalytic subunit (318 aa).

Positions 56 and 57 each coordinate carbamoyl phosphate. Lys84 contributes to the L-aspartate binding site. Residues Arg106, His143, and Gln146 each contribute to the carbamoyl phosphate site. 2 residues coordinate L-aspartate: Arg176 and Arg230. The carbamoyl phosphate site is built by Gly271 and Pro272.

This sequence belongs to the aspartate/ornithine carbamoyltransferase superfamily. ATCase family. As to quaternary structure, heterododecamer (2C3:3R2) of six catalytic PyrB chains organized as two trimers (C3), and six regulatory PyrI chains organized as three dimers (R2).

The catalysed reaction is carbamoyl phosphate + L-aspartate = N-carbamoyl-L-aspartate + phosphate + H(+). It functions in the pathway pyrimidine metabolism; UMP biosynthesis via de novo pathway; (S)-dihydroorotate from bicarbonate: step 2/3. In terms of biological role, catalyzes the condensation of carbamoyl phosphate and aspartate to form carbamoyl aspartate and inorganic phosphate, the committed step in the de novo pyrimidine nucleotide biosynthesis pathway. The protein is Aspartate carbamoyltransferase catalytic subunit of Mycobacterium avium (strain 104).